Here is a 215-residue protein sequence, read N- to C-terminus: Programmed cell death protein 10 homolog (215 aa).

Belongs to the PDCD10 family. Interacts with gck-1. Expressed in pharynx, intestine, germline, vulva and excretory canals.

The protein resides in the cytoplasm. Its subcellular location is the apical cell membrane. Its function is as follows. Involved in excretory canal elongation during postembryonic development. Plays a role in promoting Golgi stability, ER integrity and vesicle transport probably by regulating the activation of Rho GTPase cdc-42. Involved in fertility. This is Programmed cell death protein 10 homolog from Caenorhabditis elegans.